The primary structure comprises 1046 residues: Probable inorganic carbon transporter subunit DabA1 (1046 aa).

Residues Cys462, Asp464, His721, and Cys736 each contribute to the Zn(2+) site.

This sequence belongs to the inorganic carbon transporter (TC 9.A.2) DabA family. As to quaternary structure, forms a complex with DabB1. Zn(2+) serves as cofactor.

It is found in the cell inner membrane. In terms of biological role, part of an energy-coupled inorganic carbon pump. This is Probable inorganic carbon transporter subunit DabA1 from Halothiobacillus neapolitanus (strain ATCC 23641 / c2) (Thiobacillus neapolitanus).